The primary structure comprises 1035 residues: MGKAENYELYSVELGPGPGGDMAAKMSKKKKAGGGGGKRKEKLENMKKEMEINDHQLSVAELEQKYQTSATKGLSASLAAELLLRDGPNALRPPRGTPEYVKFARQLAGGLQCLMWVAAAICLIAFAIQASEGDLTTDDNLYLAIALIAVVVVTGCFGYYQEFKSTNIIASFKNLVPQQATVIRDGDKFQINADQLVVGDLVEMKGGDRVPADIRILAAQGCKVDNSSLTGESEPQTRSPECTHESPLETRNIAFFSTMCLEGTVQGLVVNTGDRTIIGRIASLASGVENEKTPIAIEIEHFVDIIAGLAILFGATFFIVAMCIGYTFLRAMVFFMAIVVAYVPEGLLATVTVCLSLTAKRLASKNCVVKNLEAVETLGSTSVICSDKTGTLTQNRMTVSHLWFDNHIHTADTTEDQSGQTFDQSSETWRALCRVLTLCNRAAFKSGQDAVPVPKRIVIGDASETALLKFSELTLGNAMGYRDRFPKVCEIPFNSTNKFQLSIHTLEDPRDPRHLLVMKGAPERVLERCSSILIKGQELPLDEQWREAFQTAYLSLGGLGERVLGFCQLYLNEKDYPPGYAFDVEAMNFPSSGLCFAGLVSMIDPPRATVPDAVLKCRTAGIRVIMVTGDHPITAKAIAASVGIISEGSETVEDIAARLRVPVDQVNRKDARACVINGMQLKDMDPSELVEALRTHPEMVFARTSPQQKLVIVESCQRLGAIVAVTGDGVNDSPALKKADIGVAMGIAGSDAAKNAADMILLDDNFASIVTGVEQGRLIFDNLKKSIAYTLTKNIPELTPYLIYITVSVPLPLGCITILFIELCTDIFPSVSLAYEKAESDIMHLRPRNPKRDRLVNEPLAAYSYFQIGAIQSFAGFTDYFTAMAQEGWFPLLCVGLRAQWEDHHLQDLQDSYGQEWTFGQRLYQQYTCYTVFFISIEVCQIADVLIRKTRRLSAFQQGFFRNKILVIAIVFQVCIGCFLCYCPGMPNIFNFMPIRFQWWLVPLPYGILIFVYDEIRKLGVRCCPGSWWDQELYY.

The tract at residues 1–41 (MGKAENYELYSVELGPGPGGDMAAKMSKKKKAGGGGGKRKE) is disordered. Topologically, residues 1 to 98 (MGKAENYELY…NALRPPRGTP (98 aa)) are cytoplasmic. Phosphotyrosine occurs at positions 7 and 10. A compositionally biased stretch (basic residues) spans 26-40 (MSKKKKAGGGGGKRK). Ser-27 is subject to Phosphoserine. Residues 99–119 (EYVKFARQLAGGLQCLMWVAA) form a helical membrane-spanning segment. Topologically, residues 120-142 (AICLIAFAIQASEGDLTTDDNLY) are lumenal. The helical transmembrane segment at 143-163 (LAIALIAVVVVTGCFGYYQEF) threads the bilayer. Over 164-299 (KSTNIIASFK…NEKTPIAIEI (136 aa)) the chain is Cytoplasmic. Residues 300-319 (EHFVDIIAGLAILFGATFFI) traverse the membrane as a helical segment. Topologically, residues 320–331 (VAMCIGYTFLRA) are lumenal. Residues 332–349 (MVFFMAIVVAYVPEGLLA) traverse the membrane as a helical segment. K(+) contacts are provided by Val-340, Ala-341, Val-343, and Glu-345. The Cytoplasmic segment spans residues 350 to 783 (TVTVCLSLTA…EQGRLIFDNL (434 aa)). Residue Asp-387 is the 4-aspartylphosphate intermediate of the active site. 2 residues coordinate Mg(2+): Asp-387 and Thr-389. 2 positions are modified to phosphoserine: Ser-463 and Ser-601. Mg(2+) is bound by residues Asp-728 and Asp-732. The helical transmembrane segment at 784–803 (KKSIAYTLTKNIPELTPYLI) threads the bilayer. Glu-797 contacts K(+). The Lumenal segment spans residues 804–813 (YITVSVPLPL). A helical membrane pass occupies residues 814–834 (GCITILFIELCTDIFPSVSLA). Glu-822 is a K(+) binding site. Topologically, residues 835 to 854 (YEKAESDIMHLRPRNPKRDR) are cytoplasmic. At Ser-840 the chain carries Phosphoserine. A helical membrane pass occupies residues 855 to 877 (LVNEPLAAYSYFQIGAIQSFAGF). Over 878 to 929 (TDYFTAMAQEGWFPLLCVGLRAQWEDHHLQDLQDSYGQEWTFGQRLYQQYTC) the chain is Lumenal. A helical membrane pass occupies residues 930–949 (YTVFFISIEVCQIADVLIRK). Residues 950–963 (TRRLSAFQQGFFRN) lie on the Cytoplasmic side of the membrane. Ser-954 bears the Phosphoserine; by PKA mark. A helical transmembrane segment spans residues 964–982 (KILVIAIVFQVCIGCFLCY). The Lumenal portion of the chain corresponds to 983-997 (CPGMPNIFNFMPIRF). Residues 998 to 1018 (QWWLVPLPYGILIFVYDEIRK) form a helical membrane-spanning segment. The Cytoplasmic segment spans residues 1019–1035 (LGVRCCPGSWWDQELYY).

The protein belongs to the cation transport ATPase (P-type) (TC 3.A.3) family. Type IIC subfamily. As to quaternary structure, the gastric H(+)/K(+) ATPase pump is composed of the catalytic alpha subunit ATP4A and the regulatory beta subunit ATP4B. Interacts (via the P-domain) with ATP4B (via N-terminus); this interaction stabilizes the lumenal-open E2 conformation state and prevents the reverse reaction of the transport cycle. Expressed in gastric parietal cells (at protein level).

It localises to the apical cell membrane. The catalysed reaction is K(+)(out) + ATP + H2O + H(+)(in) = K(+)(in) + ADP + phosphate + 2 H(+)(out). Functionally, the catalytic subunit of the gastric H(+)/K(+) ATPase pump which transports H(+) ions in exchange for K(+) ions across the apical membrane of parietal cells. Uses ATP as an energy source to pump H(+) ions to the gastric lumen while transporting K(+) ion from the lumen into the cell. Remarkably generates a million-fold proton gradient across the gastric parietal cell membrane, acidifying the gastric juice down to pH 1. Within a transport cycle, the transfer of a H(+) ion across the membrane is coupled to ATP hydrolysis and is associated with a transient phosphorylation that shifts the pump conformation from inward-facing (E1) to outward-facing state (E2). The release of the H(+) ion in the stomach lumen is followed by binding of K(+) ion converting the pump conformation back to the E1 state. The polypeptide is Potassium-transporting ATPase alpha chain 1 (Homo sapiens (Human)).